The primary structure comprises 390 residues: Transforming growth factor beta-1 proprotein (390 aa).

An N-terminal signal peptide occupies residues Met1–Gly29. Residues Leu30–Pro74 are straightjacket domain. The tract at residues Glu75–Leu271 is arm domain. 3 N-linked (GlcNAc...) asparagine glycosylation sites follow: Asn82, Asn136, and Asn176. The tract at residues Asp226–Gly252 is bowtie tail. The Cell attachment site motif lies at Arg244–Asp246. 4 disulfides stabilise this stretch: Cys285–Cys294, Cys293–Cys356, Cys322–Cys387, and Cys326–Cys389.

The protein belongs to the TGF-beta family. As to quaternary structure, homodimer; disulfide-linked. Interacts with the serine proteases, HTRA1 and HTRA3: the interaction with either inhibits TGFB1-mediated signaling and the HTRA protease activity is required for this inhibition. May interact with THSD4; this interaction may lead to sequestration by FBN1 microfibril assembly and attenuation of TGFB signaling. Interacts with CD109, DPT and ASPN. Interacts with EFEMP2. Interacts with TSKU; the interaction contributes to regulation of the hair cycle. Interacts with TGFBR3. Homodimer; disulfide-linked. Interacts with transforming growth factor beta-1 (TGF-beta-1) chain; interaction is non-covalent and maintains TGF-beta-1 in a latent state; each latency-associated peptide (LAP) monomer interacts with TGF-beta-1 in the other monomer. Interacts with LTBP1; leading to regulation of TGF-beta-1 activation. Interacts with LRRC32/GARP; leading to regulation of TGF-beta-1 activation on the surface of activated regulatory T-cells (Tregs). Interacts with LRRC33/NRROS; leading to regulation of TGF-beta-1 activation in macrophages and microglia. Interacts (via cell attachment site) with integrins ITGAV and ITGB6 (ITGAV:ITGB6), leading to release of the active TGF-beta-1. Interacts with NREP; the interaction results in a decrease in TGFB1 autoinduction. Interacts with HSP90AB1; inhibits latent TGFB1 activation. In terms of assembly, homodimer; disulfide-linked. Interacts with TGF-beta receptors (TGFBR1 and TGFBR2), leading to signal transduction. In terms of processing, transforming growth factor beta-1 proprotein: The precursor proprotein is cleaved in the Golgi apparatus by FURIN to form Transforming growth factor beta-1 (TGF-beta-1) and Latency-associated peptide (LAP) chains, which remain non-covalently linked, rendering TGF-beta-1 inactive. Post-translationally, N-glycosylated. Deglycosylation leads to activation of Transforming growth factor beta-1 (TGF-beta-1); mechanisms triggering deglycosylation-driven activation of TGF-beta-1 are however unclear.

The protein localises to the secreted. The protein resides in the extracellular space. Its subcellular location is the extracellular matrix. In terms of biological role, transforming growth factor beta-1 proprotein: Precursor of the Latency-associated peptide (LAP) and Transforming growth factor beta-1 (TGF-beta-1) chains, which constitute the regulatory and active subunit of TGF-beta-1, respectively. Its function is as follows. Required to maintain the Transforming growth factor beta-1 (TGF-beta-1) chain in a latent state during storage in extracellular matrix. Associates non-covalently with TGF-beta-1 and regulates its activation via interaction with 'milieu molecules', such as LTBP1, LRRC32/GARP and LRRC33/NRROS, that control activation of TGF-beta-1. Interaction with LRRC33/NRROS regulates activation of TGF-beta-1 in macrophages and microglia. Interaction with LRRC32/GARP controls activation of TGF-beta-1 on the surface of activated regulatory T-cells (Tregs). Interaction with integrins (ITGAV:ITGB6 or ITGAV:ITGB8) results in distortion of the Latency-associated peptide chain and subsequent release of the active TGF-beta-1. Functionally, multifunctional protein that regulates the growth and differentiation of various cell types and is involved in various processes, such as normal development, immune function, microglia function and responses to neurodegeneration. Activation into mature form follows different steps: following cleavage of the proprotein in the Golgi apparatus, Latency-associated peptide (LAP) and Transforming growth factor beta-1 (TGF-beta-1) chains remain non-covalently linked rendering TGF-beta-1 inactive during storage in extracellular matrix. At the same time, LAP chain interacts with 'milieu molecules', such as LTBP1, LRRC32/GARP and LRRC33/NRROS that control activation of TGF-beta-1 and maintain it in a latent state during storage in extracellular milieus. TGF-beta-1 is released from LAP by integrins (ITGAV:ITGB6 or ITGAV:ITGB8): integrin-binding to LAP stabilizes an alternative conformation of the LAP bowtie tail and results in distortion of the LAP chain and subsequent release of the active TGF-beta-1. Once activated following release of LAP, TGF-beta-1 acts by binding to TGF-beta receptors (TGFBR1 and TGFBR2), which transduce signal. While expressed by many cells types, TGF-beta-1 only has a very localized range of action within cell environment thanks to fine regulation of its activation by Latency-associated peptide chain (LAP) and 'milieu molecules'. Plays an important role in bone remodeling: acts as a potent stimulator of osteoblastic bone formation, causing chemotaxis, proliferation and differentiation in committed osteoblasts. Can promote either T-helper 17 cells (Th17) or regulatory T-cells (Treg) lineage differentiation in a concentration-dependent manner. At high concentrations, leads to FOXP3-mediated suppression of RORC and down-regulation of IL-17 expression, favoring Treg cell development. At low concentrations in concert with IL-6 and IL-21, leads to expression of the IL-17 and IL-23 receptors, favoring differentiation to Th17 cells. Stimulates sustained production of collagen through the activation of CREB3L1 by regulated intramembrane proteolysis (RIP). Mediates SMAD2/3 activation by inducing its phosphorylation and subsequent translocation to the nucleus. Positively regulates odontoblastic differentiation in dental papilla cells, via promotion of IPO7-mediated translocation of phosphorylated SMAD2 to the nucleus and subsequent transcription of target genes. Can induce epithelial-to-mesenchymal transition (EMT) and cell migration in various cell types. This chain is Transforming growth factor beta-1 proprotein (TGFB1), found in Canis lupus familiaris (Dog).